The sequence spans 453 residues: Tubulin alpha chain (453 aa).

Glutamine 11 is a binding site for GTP. Residue lysine 40 is modified to N6-acetyllysine. GTP contacts are provided by glutamate 71, glycine 144, threonine 145, threonine 179, asparagine 206, and asparagine 228. Residue glutamate 71 coordinates Mg(2+). Residue glutamate 254 is part of the active site.

This sequence belongs to the tubulin family. Dimer of alpha and beta chains. A typical microtubule is a hollow water-filled tube with an outer diameter of 25 nm and an inner diameter of 15 nM. Alpha-beta heterodimers associate head-to-tail to form protofilaments running lengthwise along the microtubule wall with the beta-tubulin subunit facing the microtubule plus end conferring a structural polarity. Microtubules usually have 13 protofilaments but different protofilament numbers can be found in some organisms and specialized cells. Mg(2+) is required as a cofactor. In terms of processing, undergoes a tyrosination/detyrosination cycle, the cyclic removal and re-addition of a C-terminal tyrosine residue by the enzymes tubulin tyrosine carboxypeptidase (TTCP) and tubulin tyrosine ligase (TTL), respectively. Acetylation of alpha chains at Lys-40 stabilizes microtubules and affects affinity and processivity of microtubule motors. This modification has a role in multiple cellular functions, ranging from cell motility, cell cycle progression or cell differentiation to intracellular trafficking and signaling.

Its subcellular location is the cytoplasm. It is found in the cytoskeleton. The enzyme catalyses GTP + H2O = GDP + phosphate + H(+). Tubulin is the major constituent of microtubules, a cylinder consisting of laterally associated linear protofilaments composed of alpha- and beta-tubulin heterodimers. Microtubules grow by the addition of GTP-tubulin dimers to the microtubule end, where a stabilizing cap forms. Below the cap, tubulin dimers are in GDP-bound state, owing to GTPase activity of alpha-tubulin. This is Tubulin alpha chain (TUBA) from Neospora caninum (Coccidian parasite).